A 231-amino-acid chain; its full sequence is Nitrate reductase [NAD(P)H] (231 aa).

The FAD-binding FR-type domain maps to 1-85 (PQKLGLPVGR…KGPHRHIEYT (85 aa)). Residues 25–28 (RAYT), 42–46 (LIKIY), Phe47, 59–61 (LMS), and Thr112 contribute to the FAD site.

The protein belongs to the nitrate reductase family. As to quaternary structure, homodimer. It depends on FAD as a cofactor. Requires heme as cofactor. Mo-molybdopterin serves as cofactor.

The catalysed reaction is nitrite + NAD(+) + H2O = nitrate + NADH + H(+). It catalyses the reaction nitrite + NADP(+) + H2O = nitrate + NADPH + H(+). Functionally, nitrate reductase is a key enzyme involved in the first step of nitrate assimilation in plants, fungi and bacteria. The chain is Nitrate reductase [NAD(P)H] (NAR) from Zea mays (Maize).